Here is a 487-residue protein sequence, read N- to C-terminus: MESTNRFMIGVFGPTGVGKTKLGVSIAKSVHGQVISVDSLQCYSPGGIVTAKPTPEEMDGIEHHMIGYLEAEEEPTNFVAEAVERLEKLCDHGAIPVVVGGSTSLTLPLLRGALNRGWRMAAITLLPHQSTYLGNIESRVDDMLEAGLLEELSGLKSLEDRNLNGKPNFHKGIWKTIGYQELYPYLEAQRSDGHCDELLKSGLASMKENTFQYGNTQLEWIRQALSPFLHAEKIANMSLTVVDKTSWTRGVEKPAIRMASDFCYASTSISFHPINEPKPRVICIFGGSSSGNDPAHMEAAKSLGRVCHENSIKLVYGGGTTGVMGAIASTLVELSGPNAVHGIIPEALLKYEAKESGRHAQDSAFARYGRRTVVKDMHTRKRLMIQEVIDGGDGSGFVGLSGGYGTLEELFEVITWHQLGIHDRGVCLLNMDGFFDGLVNWLGNVVKKGFIGLQDAAILSIASTAEGVVKCLDQKPGFSRKGELEWV.

Residues 1–266 (MESTNRFMIG…RMASDFCYAS (266 aa)) form an adenylate isopentenyltransferase region. The tract at residues 267–487 (TSISFHPINE…FSRKGELEWV (221 aa)) is cytokinin riboside 5'-monophosphate phosphoribohydrolase. Substrate is bound by residues Glu-352, 380–381 (RK), 403–409 (GYGTLEE), and Thr-415.

It in the N-terminal section; belongs to the IPP transferase family. This sequence in the C-terminal section; belongs to the LOG family.

The catalysed reaction is dimethylallyl diphosphate + AMP = N(6)-(dimethylallyl)adenosine 5'-phosphate + diphosphate. It catalyses the reaction N(6)-(dimethylallyl)adenosine 5'-phosphate + H2O = N(6)-dimethylallyladenine + D-ribose 5-phosphate. The enzyme catalyses 9-ribosyl-trans-zeatin 5'-phosphate + H2O = trans-zeatin + D-ribose 5-phosphate. It functions in the pathway secondary metabolite biosynthesis. Functionally, bifunctional cytokinin synthesis protein; part of the gene cluster that mediates the biosynthesis of cytokinins such as fusatin, fusatinic acids or 8-oxofusatin, known for their growth promoting and anti-senescence activities toward host plants. FCK1 is a bifunctional enzyme that performs the first steps in the biosynthesis of Fusarium cytokinins. It first condenses adenosine monophosphate (AMP) with dimethylallyl diphosphate (DMAPP) to yield isoprenyl adenosine monophosphate. It then catalyzes the removal of the phosphoribose to produce isopentenylaldehyde. The cytochrome P450 monooxygenase then converts isopentenylaldehyde to trans-zeatin. A condensation step converts trans-zeatin to fusatin which is further modified to produce fusatinic acid. The mechanism for oxidation of fusatin to fusatinic acid remains unknown. 8-oxofusatin could be produced through several pathways, via direct oxygenation of fusatin, or via the 8-oxo-pentenyladenine intermediate which itself must arise from either the prenylation of 8-oxo-AMP by FCK1 and/or oxygenation of isopentenylaldehyde. Both the FCK3 and FCK4 enzymes act downstream of the identified cytokinins to produce yet unidentified compounds. The chain is Bifunctional cytokinin biosynthesis protein from Fusarium pseudograminearum (strain CS3096) (Wheat and barley crown-rot fungus).